Consider the following 517-residue polypeptide: Lysine--tRNA ligase (517 aa).

The disordered stretch occupies residues 1–21 (MTEPNRAQAPAQNKAAADTPA). A compositionally biased stretch (low complexity) spans 7–20 (AQAPAQNKAAADTP). Residues E427 and E434 each coordinate Mg(2+).

This sequence belongs to the class-II aminoacyl-tRNA synthetase family. In terms of assembly, homodimer. Requires Mg(2+) as cofactor.

It localises to the cytoplasm. The enzyme catalyses tRNA(Lys) + L-lysine + ATP = L-lysyl-tRNA(Lys) + AMP + diphosphate. The protein is Lysine--tRNA ligase of Cupriavidus taiwanensis (strain DSM 17343 / BCRC 17206 / CCUG 44338 / CIP 107171 / LMG 19424 / R1) (Ralstonia taiwanensis (strain LMG 19424)).